A 108-amino-acid chain; its full sequence is uncharacterized protein (108 aa).

Residues 1-12 are compositionally biased toward polar residues; that stretch reads MSNQQKQLQLPS. The interval 1–22 is disordered; that stretch reads MSNQQKQLQLPSASIKKPKEKQ.

This is an uncharacterized protein from Dictyostelium discoideum (Social amoeba).